Here is a 3093-residue protein sequence, read N- to C-terminus: Genome polyprotein (3093 aa).

The 149-residue stretch at 255 to 403 (KRLLRHVHQA…TTTGERIEYY (149 aa)) folds into the Peptidase S30 domain. Catalysis depends on for P1 proteinase activity residues H311, D323, and S355. One can recognise a Peptidase C6 domain in the interval 690–809 (HYVPKVGYCY…ASELKEYEIG (120 aa)). Residues C698 and H769 each act as for helper component proteinase activity in the active site. The region spanning 1215-1366 (RVLADKDNEF…AQKSLDIMTL (152 aa)) is the Helicase ATP-binding domain. 1228–1235 (GHVGCGKS) provides a ligand contact to ATP. Residues 1316–1319 (DEVH) carry the DEVH box motif. One can recognise a Helicase C-terminal domain in the interval 1367–1546 (PTMTPLDFVK…QVPPVLRNVN (180 aa)). The short motif at 1883-1895 (DKVRKKANVHAMQ) is the Nuclear localization signal element. At Y1915 the chain carries O-(5'-phospho-RNA)-tyrosine. Positions 2041 to 2257 (SKALYGGPRC…VDVGGLYIHN (217 aa)) constitute a Peptidase C4 domain. Catalysis depends on for nuclear inclusion protein A activity residues H2082, D2121, and C2193. The region spanning 2516 to 2639 (EWFIDADGSQ…NANEEAKDVV (124 aa)) is the RdRp catalytic domain. Positions 2800–2826 (NAAATSGATTPAQNVGAGTTTPAKATP) are enriched in low complexity. The interval 2800 to 2842 (NAAATSGATTPAQNVGAGTTTPAKATPQSGRRPSFGSLIDNPI) is disordered.

It belongs to the potyviridae genome polyprotein family. In terms of processing, VPg is uridylylated by the polymerase and is covalently attached to the 5'-end of the genomic RNA. This uridylylated form acts as a nucleotide-peptide primer for the polymerase. Genome polyprotein of potyviruses undergoes post-translational proteolytic processing by the main proteinase NIa-pro resulting in the production of at least ten individual proteins. The P1 proteinase and the HC-pro cleave only their respective C-termini autocatalytically. 6K1 is essential for proper proteolytic separation of P3 from CI.

Its subcellular location is the host cytoplasmic vesicle. It is found in the virion. It carries out the reaction RNA(n) + a ribonucleoside 5'-triphosphate = RNA(n+1) + diphosphate. It catalyses the reaction Hydrolyzes glutaminyl bonds, and activity is further restricted by preferences for the amino acids in P6 - P1' that vary with the species of potyvirus, e.g. Glu-Xaa-Xaa-Tyr-Xaa-Gln-|-(Ser or Gly) for the enzyme from tobacco etch virus. The natural substrate is the viral polyprotein, but other proteins and oligopeptides containing the appropriate consensus sequence are also cleaved.. The enzyme catalyses Hydrolyzes a Gly-|-Gly bond at its own C-terminus, commonly in the sequence -Tyr-Xaa-Val-Gly-|-Gly, in the processing of the potyviral polyprotein.. Functionally, required for aphid transmission and also has proteolytic activity. Only cleaves a Gly-Gly dipeptide at its own C-terminus. Interacts with virions and aphid stylets. Acts as a suppressor of RNA-mediated gene silencing, also known as post-transcriptional gene silencing (PTGS), a mechanism of plant viral defense that limits the accumulation of viral RNAs. May have RNA-binding activity. In terms of biological role, has helicase activity. It may be involved in replication. Indispensable for virus replication. Reduces the abundance of host transcripts related to jasmonic acid biosynthesis therefore altering the host defenses. In order to increase its own stability, decreases host protein degradation pathways. Its function is as follows. Indispensable for virus replication. Functionally, mediates the cap-independent, EIF4E-dependent translation of viral genomic RNAs. Binds to the cap-binding site of host EIF4E and thus interferes with the host EIF4E-dependent mRNA export and translation. VPg-RNA directly binds EIF4E and is a template for transcription. Also forms trimeric complexes with EIF4E-EIF4G, which are templates for translation. In terms of biological role, has RNA-binding and proteolytic activities. An RNA-dependent RNA polymerase that plays an essential role in the virus replication. Its function is as follows. Involved in aphid transmission, cell-to-cell and systemis movement, encapsidation of the viral RNA and in the regulation of viral RNA amplification. The protein is Genome polyprotein of Brome streak virus (strain 11-Cal) (BStV).